Consider the following 349-residue polypeptide: MSKETLILLYGGRSAEREVSVLSAESVMRAVNYSRFIVKTYFITKGGEFIKTQEFTDTPAEEEKLLTNDLAESYPKISPAAIYEKDAVVFPVLHGPMGEDGSIQGFLEILRLAYVGPNILSASSTMDKLLAKHVFEAVGVPQVPYVAAFADENQAEIAQEVVEKLEFPVFVKPANMGSSVGISKVDDLADLQPALSEAYKYDNRVVIEQGVDAREIECAVLGNNSDVSATLPGEVVKDVGFYDYNSKYIDNKIQMDIPAKVSADLAQKIQEYAKKAYKAVNGAGLSRCDFFVTKDGNVYLNEVNAIPGFTQWSMYPLLWENMGLSYSDLIEKLVDLAKETFETRENHLL.

The 204-residue stretch at 132 to 335 folds into the ATP-grasp domain; it reads KHVFEAVGVP…YSDLIEKLVD (204 aa). 162 to 217 serves as a coordination point for ATP; that stretch reads VEKLEFPVFVKPANMGSSVGISKVDDLADLQPALSEAYKYDNRVVIEQGVDAREIE. Asp-289, Glu-302, and Asn-304 together coordinate Mg(2+).

Belongs to the D-alanine--D-alanine ligase family. Mg(2+) serves as cofactor. It depends on Mn(2+) as a cofactor.

The protein localises to the cytoplasm. The catalysed reaction is 2 D-alanine + ATP = D-alanyl-D-alanine + ADP + phosphate + H(+). The protein operates within cell wall biogenesis; peptidoglycan biosynthesis. Functionally, cell wall formation. This chain is D-alanine--D-alanine ligase, found in Lactococcus lactis subsp. cremoris (strain SK11).